A 250-amino-acid polypeptide reads, in one-letter code: 5-oxoprolinase subunit A (250 aa).

The protein belongs to the LamB/PxpA family. In terms of assembly, forms a complex composed of PxpA, PxpB and PxpC.

It carries out the reaction 5-oxo-L-proline + ATP + 2 H2O = L-glutamate + ADP + phosphate + H(+). Catalyzes the cleavage of 5-oxoproline to form L-glutamate coupled to the hydrolysis of ATP to ADP and inorganic phosphate. The protein is 5-oxoprolinase subunit A of Paraburkholderia xenovorans (strain LB400).